Consider the following 348-residue polypeptide: Protein pelota homolog (348 aa).

The protein belongs to the eukaryotic release factor 1 family. Pelota subfamily. As to quaternary structure, monomer. A divalent metal cation serves as cofactor.

The protein resides in the cytoplasm. Its function is as follows. May function in recognizing stalled ribosomes, interact with stem-loop structures in stalled mRNA molecules, and effect endonucleolytic cleavage of the mRNA. May play a role in the release non-functional ribosomes and degradation of damaged mRNAs. Has endoribonuclease activity. This is Protein pelota homolog from Methanococcus maripaludis (strain DSM 14266 / JCM 13030 / NBRC 101832 / S2 / LL).